We begin with the raw amino-acid sequence, 512 residues long: Histidine ammonia-lyase (512 aa).

Residues 143–145 (CSG) constitute a cross-link (5-imidazolinone (Cys-Gly)). S144 carries the 2,3-didehydroalanine (Ser) modification.

The protein belongs to the PAL/histidase family. In terms of processing, contains an active site 4-methylidene-imidazol-5-one (MIO), which is formed autocatalytically by cyclization and dehydration of residues Cys-Ser-Gly.

The protein resides in the cytoplasm. It carries out the reaction L-histidine = trans-urocanate + NH4(+). Its pathway is amino-acid degradation; L-histidine degradation into L-glutamate; N-formimidoyl-L-glutamate from L-histidine: step 1/3. The chain is Histidine ammonia-lyase from Streptomyces avermitilis (strain ATCC 31267 / DSM 46492 / JCM 5070 / NBRC 14893 / NCIMB 12804 / NRRL 8165 / MA-4680).